The primary structure comprises 1604 residues: Ubiquitin carboxyl-terminal hydrolase 32 (1604 aa).

EF-hand domains are found at residues 91-126 (KDEE…VDGK), 228-263 (IRPS…CCRG), and 264-299 (PLAE…LLEV). Residues Asp241, Asn243, Asp245, His247, Glu252, Asp277, Asp279, Asp281, and Glu288 each contribute to the Ca(2+) site. The 217-residue stretch at 369–585 (ATPEEEGQII…ANLALPRPVI (217 aa)) folds into the DUSP domain. The region spanning 734-1567 (TGLSNLGNTC…SAYILFYEQQ (834 aa)) is the USP domain. The active-site Nucleophile is Cys743. Phosphotyrosine is present on Tyr1173. Disordered regions lie at residues 1343–1362 (KKVD…SKSP) and 1367–1431 (ANII…DASK). A phosphoserine mark is found at Ser1350, Ser1372, Ser1376, and Ser1454. The segment covering 1367–1399 (ANIISSPKGSPSSSRKSGTSCPSSKNSSPNSSP) has biased composition (low complexity). The active-site Proton acceptor is His1526. Ser1588 bears the Phosphoserine mark. At Cys1601 the chain carries Cysteine methyl ester. Cys1601 carries the S-farnesyl cysteine lipid modification. A propeptide spans 1602–1604 (VLQ) (removed in mature form).

Belongs to the peptidase C19 family.

It is found in the golgi apparatus membrane. The enzyme catalyses Thiol-dependent hydrolysis of ester, thioester, amide, peptide and isopeptide bonds formed by the C-terminal Gly of ubiquitin (a 76-residue protein attached to proteins as an intracellular targeting signal).. Functionally, deubiquitinase that can remove conjugated ubiquitin from target proteins, such as RAB7A and LAMTOR1. Acts as a positive regulator of the mTORC1 signaling by mediating deubiquitination of LAMTOR1, thereby promoting the association between LAMTOR1 and the lysosomal V-ATPase complex and subsequent activation of the mTORC1 complex. This is Ubiquitin carboxyl-terminal hydrolase 32 (USP32) from Homo sapiens (Human).